The primary structure comprises 74 residues: ATP synthase subunit c (74 aa).

2 helical membrane-spanning segments follow: residues 8-28 (FIGTGLMAIGMYGAALGVSNI) and 52-72 (IGAGLAEAMGLFSFVIAMLLI).

This sequence belongs to the ATPase C chain family. As to quaternary structure, F-type ATPases have 2 components, F(1) - the catalytic core - and F(0) - the membrane proton channel. F(1) has five subunits: alpha(3), beta(3), gamma(1), delta(1), epsilon(1). F(0) has three main subunits: a(1), b(2) and c(10-14). The alpha and beta chains form an alternating ring which encloses part of the gamma chain. F(1) is attached to F(0) by a central stalk formed by the gamma and epsilon chains, while a peripheral stalk is formed by the delta and b chains.

It localises to the cell inner membrane. F(1)F(0) ATP synthase produces ATP from ADP in the presence of a proton or sodium gradient. F-type ATPases consist of two structural domains, F(1) containing the extramembraneous catalytic core and F(0) containing the membrane proton channel, linked together by a central stalk and a peripheral stalk. During catalysis, ATP synthesis in the catalytic domain of F(1) is coupled via a rotary mechanism of the central stalk subunits to proton translocation. In terms of biological role, key component of the F(0) channel; it plays a direct role in translocation across the membrane. A homomeric c-ring of between 10-14 subunits forms the central stalk rotor element with the F(1) delta and epsilon subunits. This chain is ATP synthase subunit c, found in Rickettsia conorii (strain ATCC VR-613 / Malish 7).